We begin with the raw amino-acid sequence, 172 residues long: Macro domain-containing protein CT2219 (172 aa).

In terms of domain architecture, Macro spans 1–172; it reads MPDNVLIHAI…DVYQKALAAG (172 aa).

Belongs to the MacroD-type family.

The protein is Macro domain-containing protein CT2219 of Chlorobaculum tepidum (strain ATCC 49652 / DSM 12025 / NBRC 103806 / TLS) (Chlorobium tepidum).